We begin with the raw amino-acid sequence, 89 residues long: FMRFamide-like neuropeptides 19 (89 aa).

Residues 1-20 (MSFQLTLFSMLFLLIAVVVG) form the signal peptide. A propeptide spanning residues 21–67 (QPIQSQNGDLKMQAVQDNSPLNMEAFNDDSALYDYLEQSDPSLKSME) is cleaved from the precursor. Phe-76 is modified (phenylalanine amide). The propeptide occupies 80-89 (ASWASSVRFG).

This sequence belongs to the FARP (FMRFamide related peptide) family. Each flp gene is expressed in a distinct set of neurons. Flp-19 is expressed in the URX interneurons, the serotonin and acetylcholine-expressing HSN neurons, and the AIN, AWA and BAG neurons.

It localises to the secreted. Functionally, FMRFamides and FMRFamide-like peptides are neuropeptides. WANQVRF-amide inhibits the activity of dissected pharyngeal myogenic muscle system. The polypeptide is FMRFamide-like neuropeptides 19 (Caenorhabditis elegans).